A 299-amino-acid polypeptide reads, in one-letter code: Bifunctional protein FolD (299 aa).

Residues 168–170 (GRS), Ser193, and Ile234 contribute to the NADP(+) site.

Belongs to the tetrahydrofolate dehydrogenase/cyclohydrolase family. In terms of assembly, homodimer.

The catalysed reaction is (6R)-5,10-methylene-5,6,7,8-tetrahydrofolate + NADP(+) = (6R)-5,10-methenyltetrahydrofolate + NADPH. It carries out the reaction (6R)-5,10-methenyltetrahydrofolate + H2O = (6R)-10-formyltetrahydrofolate + H(+). It participates in one-carbon metabolism; tetrahydrofolate interconversion. Functionally, catalyzes the oxidation of 5,10-methylenetetrahydrofolate to 5,10-methenyltetrahydrofolate and then the hydrolysis of 5,10-methenyltetrahydrofolate to 10-formyltetrahydrofolate. The sequence is that of Bifunctional protein FolD from Bartonella tribocorum (strain CIP 105476 / IBS 506).